The primary structure comprises 343 residues: Protein RecA (343 aa).

66-73 (GPESSGKT) contributes to the ATP binding site.

This sequence belongs to the RecA family.

The protein resides in the cytoplasm. Functionally, can catalyze the hydrolysis of ATP in the presence of single-stranded DNA, the ATP-dependent uptake of single-stranded DNA by duplex DNA, and the ATP-dependent hybridization of homologous single-stranded DNAs. It interacts with LexA causing its activation and leading to its autocatalytic cleavage. This is Protein RecA from Rickettsia bellii (strain OSU 85-389).